The sequence spans 523 residues: MGSLPTDNLESMSICSQNPLDPDEFRRQGHMIIDFLADYYKNVKVSSRSQANPGSQQTLPETAPNHSESIETILQDVQNDIIPGITHWQSPNYFAYFPSSGSVAGFLGEMLSSGFNVVGFNWMSSPAATELESIVMNWLGQMLNLPKSFLFSSDDNAGSSGGGVLQGTTCEAILCTLTASRDKMLNKIGRENINKLVVYASDQTHCALQKAAQIAGINPKNFRAIATSKATDFGLSPQALLSTILADIESGLVPLFLCATVGTTSSTAVDPIGPLCEVAKQFGIWVHVDAAYAGSACICPEFRHFIDGVEEADSFSLNAHKWFFTTLDCCCLWVKDSNALVKALSTSPEYLKNKATDSKQVIDYKDWQIALSRRFRSMKLWLVLRSYGVANLRSFLRSHVKMAKHFDGLIAMDKRFEIVVPNTFAMVCFRLKPAAIFNGKLGENGVDYNCIEEKTNEINSKLLESVNASGSIYMTHAVVGGVYMIRFAVGATLTEERHVSMAWKVIQEHTDAILGTVDDSVVA.

Positions 1 to 19 are enriched in polar residues; the sequence is MGSLPTDNLESMSICSQNP. Disordered regions lie at residues 1–20 and 47–66; these read MGSL…QNPL and SRSQ…APNH. Position 321 is an N6-(pyridoxal phosphate)lysine (Lys-321).

Belongs to the group II decarboxylase family. As to quaternary structure, homodimer. The cofactor is pyridoxal 5'-phosphate. As to expression, roots.

It catalyses the reaction L-tyrosine + H(+) = tyramine + CO2. It carries out the reaction L-dopa + H(+) = dopamine + CO2. The enzyme catalyses 5-hydroxy-L-tryptophan + H(+) = serotonin + CO2. Its function is as follows. May play an important role in providing precursors for alkaloid synthesis in the roots and germinating seedlings. The protein is Tyrosine/DOPA decarboxylase 5 (TYDC5) of Papaver somniferum (Opium poppy).